The chain runs to 369 residues: Anhydro-N-acetylmuramic acid kinase (369 aa).

Residue 12-19 participates in ATP binding; that stretch reads GTSLDGVD.

It belongs to the anhydro-N-acetylmuramic acid kinase family.

It catalyses the reaction 1,6-anhydro-N-acetyl-beta-muramate + ATP + H2O = N-acetyl-D-muramate 6-phosphate + ADP + H(+). Its pathway is amino-sugar metabolism; 1,6-anhydro-N-acetylmuramate degradation. It participates in cell wall biogenesis; peptidoglycan recycling. Its function is as follows. Catalyzes the specific phosphorylation of 1,6-anhydro-N-acetylmuramic acid (anhMurNAc) with the simultaneous cleavage of the 1,6-anhydro ring, generating MurNAc-6-P. Is required for the utilization of anhMurNAc either imported from the medium or derived from its own cell wall murein, and thus plays a role in cell wall recycling. In Actinobacillus pleuropneumoniae serotype 3 (strain JL03), this protein is Anhydro-N-acetylmuramic acid kinase.